A 323-amino-acid chain; its full sequence is Calcium homeostasis modulator protein 2 (323 aa).

Topologically, residues 1-21 (MAALIAENFRFLSLFFKSKDV) are cytoplasmic. A central pore region spans residues 14–39 (LFFKSKDVMIFNGLVALGTVGSQELF). Residues 22–43 (MIFNGLVALGTVGSQELFTVVA) traverse the membrane as a helical segment. Over 44–52 (FHCPCSPAR) the chain is Extracellular. Disulfide bonds link Cys46/Cys130 and Cys48/Cys162. Residues 53–76 (NYLYGLAAIGVPALALFLIGVILN) traverse the membrane as a helical segment. The Cytoplasmic segment spans residues 77 to 101 (NHTWNLVAECQYRRTKNCSAAPNFL). Residues 102–132 (LLSSIVGRAAVAPVTWSVISLLRGEAYVCAL) form a helical membrane-spanning segment. At 133-179 (SEFVNPHSLMVGERSFPVAHATEILARFPCGEGPANLSVFREEVSRR) the chain is on the extracellular side. The tract at residues 145–152 (ERSFPVAH) is hemichannel docking. Residues 180–206 (LKYESQLFGWLLIGVVAILVFLTKCLK) traverse the membrane as a helical segment. Topologically, residues 207–323 (HYCSPLSYRQ…DHVEMSLLPS (117 aa)) are cytoplasmic. The segment at 214-251 (YRQEAYWAQYRANEDQLFQRTAEVHSRVLAANNVRRFF) is intersubunit interaction.

It belongs to the CALHM family. Homo-undecamer. Two undecameric hemichannels can assemble in a head-to-head manner to form a gap junction.

The protein localises to the cell membrane. It catalyses the reaction ATP(in) = ATP(out). In terms of biological role, pore-forming subunit of Ca(2+) homeostasis modulator channels. Mediates ATP release from astrocytes and ATP-induced Ca(2+) influx in microglia thus regulating neuronal ATP and Ca(2+) homeostasis, synaptic transmission and neuroinflammatory response. May form intercellular gap junctions. The gating mechanism remains unknown. The chain is Calcium homeostasis modulator protein 2 (CALHM2) from Bos taurus (Bovine).